The chain runs to 800 residues: MRLHFCSLLLLYCIVFVSSFLTTDALACLPDQIQALIQFKNEFESDGCNRSDYLNGVQCDNTTGAVTKLQLPSGCFTGTLKPNSSLFELHQLRYLNLSHNNFTSSSLPSEFSNLTRLEVLSLASSSFTGQVPSSISNLILLTHLNLSHNELTGSFPPVRNLTKLSFLDLSYNQFSGAIPFDLLPTLPFLSYLDLKKNHLTGSIDVPNSSSSSKLVRLSLGFNQFEGKIIEPISKLINLNHLELASLNISHPIDLRVFAPLKSLLVFDIRQNRLLPASLSSDSEFPLSLISLILIQCDIIEFPNIFKTLQNLEHIDISNNLIKGKVPEWFWKLPRLSIANLVNNSLTGFEGSSEVLLNSSVQLLDFAYNSMTGAFPTPPLGSIYLSAWNNSFTGNIPLSICNRSSLIVLDLSYNKFTGPIPQCLSNLKVVNLRKNSLEGSIPDEFHSGAKTQTLDVGYNRLTGKLPKSLLNCSSLRFLSVDNNRIEDTFPFWLKALPNLHVLTLRSNRFFGHLSPPDRGPLAFPELRILELSDNSFTGSLPPNFFVNWKASSPKINEDGRIYMGDYKNAYYIYEDTMDLQYKGLFMEQGKVLTFYSTIDFSGNKLEGQIPESIGLLKELIALNLSNNAFTGHIPMSLANVTELESLDLSRNQLSGNIPRELGSLSFLAYISVAHNQLKGEIPQGPQFSGQAESSFEGNVGLCGLPLQGSCVAPPTKYPKEEDEEEEEDEVIEWKAVFFGYWPGLLLGLVMAHVIASFKPKWFVKILGPAKGKQVDPVRLFMNLDSRWDSFNNKDTVEEEVI.

Residues 1 to 19 (MRLHFCSLLLLYCIVFVSS) form the signal peptide. Residues 20–733 (FLTTDALACL…EEEDEVIEWK (714 aa)) lie on the Extracellular side of the membrane. Residues Asn49, Asn61, Asn83, Asn96, Asn101, and Asn113 are each glycosylated (N-linked (GlcNAc...) asparagine). 12 LRR repeats span residues 89–113 (LHQLRYLNLSHNNFTSSSLPSEFSN), 115–138 (TRLEVLSLASSSFTGQVPSSISNL), 139–161 (ILLTHLNLSHNELTGSFPPVRNL), 162–185 (TKLSFLDLSYNQFSGAIPFDLLPT), 187–212 (PFLSYLDLKKNHLTGSIDVPNSSSSS), 214–235 (LVRLSLGFNQFEGKIIEPISKL), 236–259 (INLNHLELASLNISHPIDLRVFAP), 260–281 (LKSLLVFDIRQNRLLPASLSSD), 285–307 (PLSLISLILIQCDIIEFPNIFKT), 308–332 (LQNLEHIDISNNLIKGKVPEWFWKL), 334–357 (RLSIANLVNNSLTGFEGSSEVLLN), and 358–381 (SSVQLLDFAYNSMTGAFPTPPLGS). N-linked (GlcNAc...) asparagine glycans are attached at residues Asn145 and Asn160. Asn207 carries an N-linked (GlcNAc...) asparagine glycan. The N-linked (GlcNAc...) asparagine glycan is linked to Asn247. N-linked (GlcNAc...) asparagine glycans are attached at residues Asn342 and Asn357. Residues 382–401 (IYLSAWNNSFTGNIPLSICN) form an LRR 13; degenerate repeat. Residues Asn388 and Asn401 are each glycosylated (N-linked (GlcNAc...) asparagine). LRR repeat units lie at residues 402 to 423 (RSSLIVLDLSYNKFTGPIPQCL), 424 to 446 (SNLKVVNLRKNSLEGSIPDEFHS), 448 to 471 (AKTQTLDVGYNRLTGKLPKSLLNC), 472 to 494 (SSLRFLSVDNNRIEDTFPFWLKA), 495 to 519 (LPNLHVLTLRSNRFFGHLSPPDRGP), 522 to 546 (FPELRILELSDNSFTGSLPPNFFVN), 591 to 615 (LTFYSTIDFSGNKLEGQIPESIGLL), 616 to 639 (KELIALNLSNNAFTGHIPMSLANV), 640 to 663 (TELESLDLSRNQLSGNIPRELGSL), and 665 to 688 (FLAYISVAHNQLKGEIPQGPQFSG). N-linked (GlcNAc...) asparagine glycosylation occurs at Asn470. 2 N-linked (GlcNAc...) asparagine glycosylation sites follow: Asn622 and Asn638. A helical transmembrane segment spans residues 734-754 (AVFFGYWPGLLLGLVMAHVIA). Over 755–800 (SFKPKWFVKILGPAKGKQVDPVRLFMNLDSRWDSFNNKDTVEEEVI) the chain is Cytoplasmic.

This sequence belongs to the RLP family.

The protein resides in the cell membrane. This Arabidopsis thaliana (Mouse-ear cress) protein is Receptor like protein 26.